Consider the following 138-residue polypeptide: Large ribosomal subunit protein uL16 (138 aa).

A compositionally biased stretch (basic residues) spans 1-17 (MLIPRKVKHRKQHHPRQ). Residues 1–22 (MLIPRKVKHRKQHHPRQRGIAS) are disordered.

The protein belongs to the universal ribosomal protein uL16 family. As to quaternary structure, part of the 50S ribosomal subunit.

Functionally, binds 23S rRNA and is also seen to make contacts with the A and possibly P site tRNAs. The chain is Large ribosomal subunit protein uL16 from Mycobacterium tuberculosis (strain ATCC 25177 / H37Ra).